The following is a 139-amino-acid chain: ATP synthase epsilon chain (139 aa).

The protein belongs to the ATPase epsilon chain family. In terms of assembly, F-type ATPases have 2 components, CF(1) - the catalytic core - and CF(0) - the membrane proton channel. CF(1) has five subunits: alpha(3), beta(3), gamma(1), delta(1), epsilon(1). CF(0) has three main subunits: a, b and c.

It localises to the cell inner membrane. Functionally, produces ATP from ADP in the presence of a proton gradient across the membrane. In Pseudomonas putida (strain ATCC 47054 / DSM 6125 / CFBP 8728 / NCIMB 11950 / KT2440), this protein is ATP synthase epsilon chain.